The sequence spans 78 residues: Large ribosomal subunit protein bL28 (78 aa).

The disordered stretch occupies residues M1–N23. Residues R11–N22 show a composition bias toward polar residues.

It belongs to the bacterial ribosomal protein bL28 family.

The protein is Large ribosomal subunit protein bL28 of Stenotrophomonas maltophilia (strain R551-3).